We begin with the raw amino-acid sequence, 257 residues long: Fimbrial assembly protein, serogroup E1 (257 aa).

In Dichelobacter nodosus (Bacteroides nodosus), this protein is Fimbrial assembly protein, serogroup E1 (fimB).